The following is a 305-amino-acid chain: Protein FdhE homolog (305 aa).

The protein belongs to the FdhE family.

It localises to the cytoplasm. In terms of biological role, necessary for formate dehydrogenase activity. This Haemophilus ducreyi (strain 35000HP / ATCC 700724) protein is Protein FdhE homolog.